We begin with the raw amino-acid sequence, 338 residues long: tRNA pseudouridine synthase D (338 aa).

The active-site Nucleophile is the D79. The region spanning 154 to 303 is the TRUD domain; that stretch reads GVPNYFGEQR…EEAWRANILY (150 aa).

This sequence belongs to the pseudouridine synthase TruD family.

The enzyme catalyses uridine(13) in tRNA = pseudouridine(13) in tRNA. In terms of biological role, responsible for synthesis of pseudouridine from uracil-13 in transfer RNAs. The polypeptide is tRNA pseudouridine synthase D (Legionella pneumophila (strain Lens)).